The sequence spans 686 residues: Amphiphysin (686 aa).

Coiled-coil stretches lie at residues Ala-10–Glu-83 and Asp-144–Leu-191. One can recognise a BAR domain in the interval Val-24–Asp-240. Disordered stretches follow at residues Ser-244–Glu-314, Ala-421–Ala-441, and Val-483–Val-597. Phosphoserine is present on Ser-252. Thr-260 carries the post-translational modification Phosphothreonine. Pro residues predominate over residues Pro-261–Thr-274. 4 positions are modified to phosphoserine: Ser-262, Ser-268, Ser-272, and Ser-276. Position 280 is a phosphothreonine (Thr-280). The span at Glu-424 to Ala-441 shows a compositional bias: low complexity. Position 500 is a phosphoserine (Ser-500). The segment covering Ser-541–Ala-562 has biased composition (basic and acidic residues). In terms of domain architecture, SH3 spans Gly-613 to Glu-686. Position 629 is a phosphoserine (Ser-629).

Heterodimer with BIN1. Binds SH3GLB1. Interacts with REPS1 and SGIP1. Binds AP2A2. Interacts with AP2B1. Interacts with DNM1 and SYNJ1.

It is found in the cytoplasmic vesicle. Its subcellular location is the secretory vesicle. The protein resides in the synaptic vesicle membrane. The protein localises to the cytoplasm. It localises to the cytoskeleton. Functionally, may participate in mechanisms of regulated exocytosis in synapses and certain endocrine cell types. May control the properties of the membrane associated cytoskeleton. The protein is Amphiphysin (Amph) of Mus musculus (Mouse).